An 892-amino-acid polypeptide reads, in one-letter code: Translation initiation factor IF-2 (892 aa).

The disordered stretch occupies residues 51 to 296 (REHGSAPNKL…KGKRKPSTLQ (246 aa)). Polar residues predominate over residues 68–82 (STLNIPSTGGKSKSV). Residues 99–217 (EQAKAEEQAQ…KMAAENEGKW (119 aa)) are compositionally biased toward basic and acidic residues. A compositionally biased stretch (polar residues) spans 224 to 237 (QTESADYHVTTSQH). Positions 239–254 (RAAEDENDAKVEGDRR) are enriched in basic and acidic residues. Positions 255–269 (SRTRGGKATKQKKGN) are enriched in basic residues. The segment covering 270–283 (KLSESKADREEARA) has biased composition (basic and acidic residues). The region spanning 391–560 (HRAPVVTIMG…LLQAEVMELK (170 aa)) is the tr-type G domain. The segment at 400 to 407 (GHVDHGKT) is G1. 400–407 (GHVDHGKT) contributes to the GTP binding site. Residues 425–429 (GITQH) are G2. The tract at residues 446–449 (DTPG) is G3. GTP-binding positions include 446–450 (DTPGH) and 500–503 (NKID). Positions 500–503 (NKID) are G4. The G5 stretch occupies residues 536 to 538 (SAK).

The protein belongs to the TRAFAC class translation factor GTPase superfamily. Classic translation factor GTPase family. IF-2 subfamily.

Its subcellular location is the cytoplasm. One of the essential components for the initiation of protein synthesis. Protects formylmethionyl-tRNA from spontaneous hydrolysis and promotes its binding to the 30S ribosomal subunits. Also involved in the hydrolysis of GTP during the formation of the 70S ribosomal complex. This Yersinia enterocolitica serotype O:8 / biotype 1B (strain NCTC 13174 / 8081) protein is Translation initiation factor IF-2.